A 457-amino-acid chain; its full sequence is Bifunctional protein GlmU (457 aa).

Residues 1 to 230 are pyrophosphorylase; it reads MSKRYAVVLA…FEESLGVNDR (230 aa). UDP-N-acetyl-alpha-D-glucosamine is bound by residues 9 to 12, Lys23, Gln73, and 78 to 79; these read LAAG and GT. Asp103 contacts Mg(2+). Gly140, Glu155, Asn170, and Asn228 together coordinate UDP-N-acetyl-alpha-D-glucosamine. Asn228 contributes to the Mg(2+) binding site. Residues 231–251 form a linker region; sequence IALAEASRLMQRRINENHMRN. Positions 252-457 are N-acetyltransferase; the sequence is GVTLVNPENT…GYAKHLNHGK (206 aa). UDP-N-acetyl-alpha-D-glucosamine-binding residues include Arg333 and Lys351. His363 (proton acceptor) is an active-site residue. UDP-N-acetyl-alpha-D-glucosamine contacts are provided by Tyr366 and Asn377. Residues 386–387, Ala423, and Arg440 contribute to the acetyl-CoA site; that span reads NY.

It in the N-terminal section; belongs to the N-acetylglucosamine-1-phosphate uridyltransferase family. In the C-terminal section; belongs to the transferase hexapeptide repeat family. As to quaternary structure, homotrimer. Mg(2+) is required as a cofactor.

The protein resides in the cytoplasm. It carries out the reaction alpha-D-glucosamine 1-phosphate + acetyl-CoA = N-acetyl-alpha-D-glucosamine 1-phosphate + CoA + H(+). It catalyses the reaction N-acetyl-alpha-D-glucosamine 1-phosphate + UTP + H(+) = UDP-N-acetyl-alpha-D-glucosamine + diphosphate. Its pathway is nucleotide-sugar biosynthesis; UDP-N-acetyl-alpha-D-glucosamine biosynthesis; N-acetyl-alpha-D-glucosamine 1-phosphate from alpha-D-glucosamine 6-phosphate (route II): step 2/2. It participates in nucleotide-sugar biosynthesis; UDP-N-acetyl-alpha-D-glucosamine biosynthesis; UDP-N-acetyl-alpha-D-glucosamine from N-acetyl-alpha-D-glucosamine 1-phosphate: step 1/1. It functions in the pathway bacterial outer membrane biogenesis; LPS lipid A biosynthesis. Catalyzes the last two sequential reactions in the de novo biosynthetic pathway for UDP-N-acetylglucosamine (UDP-GlcNAc). The C-terminal domain catalyzes the transfer of acetyl group from acetyl coenzyme A to glucosamine-1-phosphate (GlcN-1-P) to produce N-acetylglucosamine-1-phosphate (GlcNAc-1-P), which is converted into UDP-GlcNAc by the transfer of uridine 5-monophosphate (from uridine 5-triphosphate), a reaction catalyzed by the N-terminal domain. In Listeria monocytogenes serotype 4b (strain F2365), this protein is Bifunctional protein GlmU.